A 339-amino-acid polypeptide reads, in one-letter code: Uroporphyrinogen decarboxylase (339 aa).

Residues 23–27 (RQAGR), Asp72, Tyr147, Thr202, and His315 each bind substrate.

The protein belongs to the uroporphyrinogen decarboxylase family. As to quaternary structure, homodimer.

Its subcellular location is the cytoplasm. The catalysed reaction is uroporphyrinogen III + 4 H(+) = coproporphyrinogen III + 4 CO2. Its pathway is porphyrin-containing compound metabolism; protoporphyrin-IX biosynthesis; coproporphyrinogen-III from 5-aminolevulinate: step 4/4. In terms of biological role, catalyzes the decarboxylation of four acetate groups of uroporphyrinogen-III to yield coproporphyrinogen-III. This chain is Uroporphyrinogen decarboxylase, found in Citrifermentans bemidjiense (strain ATCC BAA-1014 / DSM 16622 / JCM 12645 / Bem) (Geobacter bemidjiensis).